Reading from the N-terminus, the 232-residue chain is 6-phosphogluconolactonase (232 aa).

This sequence belongs to the glucosamine/galactosamine-6-phosphate isomerase family. 6-phosphogluconolactonase subfamily.

The enzyme catalyses 6-phospho-D-glucono-1,5-lactone + H2O = 6-phospho-D-gluconate + H(+). It functions in the pathway carbohydrate degradation; pentose phosphate pathway; D-ribulose 5-phosphate from D-glucose 6-phosphate (oxidative stage): step 2/3. Hydrolysis of 6-phosphogluconolactone to 6-phosphogluconate. This is 6-phosphogluconolactonase (pgl) from Aggregatibacter actinomycetemcomitans (Actinobacillus actinomycetemcomitans).